A 461-amino-acid polypeptide reads, in one-letter code: Putative dipeptidase CPSG_01350 (461 aa).

Residues 1–10 (MSARDNEKGS) show a composition bias toward basic and acidic residues. The segment at 1-31 (MSARDNEKGSARSQPSHAAASEIENVPRPSR) is disordered. Residues 35–52 (WTGTMIKVFIICACAGIV) traverse the membrane as a helical segment. Histidine 90, aspartate 92, and glutamate 203 together coordinate Zn(2+). A disulfide bridge links cysteine 142 with cysteine 232. Histidine 230 is a substrate binding site. Zn(2+)-binding residues include histidine 274 and histidine 295. Substrate is bound by residues arginine 306 and aspartate 366. The N-linked (GlcNAc...) asparagine glycan is linked to asparagine 379.

It belongs to the metallo-dependent hydrolases superfamily. Peptidase M19 family. Requires Zn(2+) as cofactor.

Its subcellular location is the membrane. The catalysed reaction is an L-aminoacyl-L-amino acid + H2O = 2 an L-alpha-amino acid. Its function is as follows. Hydrolyzes a wide range of dipeptides. The protein is Putative dipeptidase CPSG_01350 of Coccidioides posadasii (strain RMSCC 757 / Silveira) (Valley fever fungus).